A 566-amino-acid chain; its full sequence is Chondroitin sulfate proteoglycan 5 (566 aa).

A signal peptide spans 1–30 (MGRAGGGGPGRGPPPLLLFLGAALVLASGA). At 31 to 423 (VPAREAGSAV…SIITDFQVMC (393 aa)) the chain is on the extracellular side. Residue serine 38 is glycosylated (O-linked (Xyl...) (chondroitin sulfate) serine). The interval 39 to 82 (AVEAEELVKGSPAWEPPANDTREEAGPPAAGEDEASWTAPGGEL) is disordered. An N-linked (GlcNAc...) asparagine glycan is attached at asparagine 57. Residue serine 117 is glycosylated (O-linked (Xyl...) (chondroitin sulfate) serine). Disordered stretches follow at residues 143–202 (IPEA…LEPQ), 215–248 (GLDGEGRGADLGSFPGSPGTSENHPDTEGETPSW), and 262–354 (ESDF…ASSE). A glycan (O-linked (GalNAc...) serine) is linked at serine 165. The tract at residues 264-301 (DFYPTTSFYDDLDEEEEEEEDDKDAVGGGDLEDENELL) is interaction with TNC and TNR. Residues 273–286 (DDLDEEEEEEEDDK) are compositionally biased toward acidic residues. Residues 371-413 (RSVCDLFPSYCHNGGQCYLVENIGAFCRCNTQDYIWHKGMRCE) form the EGF-like domain. Disulfide bonds link cysteine 374-cysteine 387, cysteine 381-cysteine 397, and cysteine 399-cysteine 412. Residues 424–444 (VAVGSAALVLLLLFMMTVFFA) traverse the membrane as a helical segment. Residues 442–460 (FFAKKLYLLKTENTKLRRT) are interaction with GOPC. The Cytoplasmic segment spans residues 445-566 (KKLYLLKTEN…DVNCLQNNLT (122 aa)). 4 positions are modified to phosphoserine: serine 467, serine 475, serine 483, and serine 543.

In terms of assembly, binds TNR and probably TNC. Interacts with ERBB3 and GOPC. Interacts with MDK; this interaction is independent of the presence of chondroitin sulfate chains and promotes elongation of oligodendroglial precursor-like cells. Post-translationally, N-glycosylated. O-glycosylated; contains chondroitin sulfate glycans. Part-time proteoglycan, expressed in part as a proteoglycan exhibiting chondroitin sulfate glycans and in part as a non-proteoglycan form. The relative amount of both forms depends on tissues and tissue maturation. In terms of processing, phosphorylated; in intracellular and extracellular parts. As to expression, detected in cerebrospinal fluid (at protein level). Detected in urine (at protein level). Expressed in brain (at protein level).

The protein localises to the cell membrane. It is found in the synaptic cell membrane. Its subcellular location is the endoplasmic reticulum membrane. It localises to the golgi apparatus membrane. The protein resides in the cell surface. The protein localises to the secreted. In terms of biological role, may function as a growth and differentiation factor involved in neuritogenesis. May induce ERBB3 activation. This Homo sapiens (Human) protein is Chondroitin sulfate proteoglycan 5 (CSPG5).